The following is a 106-amino-acid chain: Large ribosomal subunit protein uL24 (106 aa).

This sequence belongs to the universal ribosomal protein uL24 family. As to quaternary structure, part of the 50S ribosomal subunit.

One of two assembly initiator proteins, it binds directly to the 5'-end of the 23S rRNA, where it nucleates assembly of the 50S subunit. Functionally, one of the proteins that surrounds the polypeptide exit tunnel on the outside of the subunit. The sequence is that of Large ribosomal subunit protein uL24 from Blochmanniella floridana.